Consider the following 63-residue polypeptide: Alpha-conotoxin-like PuSG1.2 (63 aa).

A signal peptide spans 1–21 (MRCLALLVVTLLLFTATATTG). Residues 22-43 (ASNGMNAAASGEAPDSISLAVR) constitute a propeptide that is removed on maturation. Disulfide bonds link cysteine 46–cysteine 52 and cysteine 47–cysteine 60. The segment at 48–50 (PDP) is lacks the Ser-Xaa-Pro motif that is crucial for potent interaction with nAChR.

Belongs to the conotoxin A superfamily. Expressed by the salivary gland.

It is found in the secreted. Its function is as follows. Alpha-conopeptides-like may act on postsynaptic membranes, they bind to the nicotinic acetylcholine receptors (nAChR) and thus inhibit them. Has possibly a distinct nAChR binding mode from other alpha-conotoxins, due to a different three residue motif (lacks the Ser-Xaa-Pro motif). This chain is Alpha-conotoxin-like PuSG1.2, found in Conus pulicarius (Flea-bitten cone).